The chain runs to 925 residues: Collagen alpha-2(I) chain (925 aa).

Residues 1–925 (SGGFDFSFLP…FGYEGDFYRA (925 aa)) form a disordered region. Pro-10 and Pro-13 each carry 4-hydroxyproline. The segment covering 22–34 (RYYGVGLGPGPMG) has biased composition (gly residues). Residues 35–74 (LMGPRGPPGASGAPGPQGFQGPAGEPGEPGQTGPAGARGP) are compositionally biased toward low complexity. A 4-hydroxyproline mark is found at Pro-42 and Pro-48. The residue at position 103 (Lys-103) is a 5-hydroxylysine; alternate. The O-linked (Gal...) hydroxylysine; alternate glycan is linked to Lys-103. The segment covering 154–171 (DGSVGPVGPAGPIGSAGP) has biased composition (low complexity). The span at 271–280 (GESGGKGEPG) shows a compositional bias: gly residues. A compositionally biased stretch (low complexity) spans 281 to 291 (SAGPQGPPGSS). Gly residues predominate over residues 306 to 315 (GLRGGPGSRG). Residues Pro-317, Pro-332, and Pro-335 each carry the 4-hydroxyproline modification. Residues 363–379 (IDGRPGPIGPAGARGEA) are compositionally biased toward low complexity. Over residues 423 to 432 (GVQGGKGEQG) the composition is skewed to gly residues. Composition is skewed to low complexity over residues 479–496 (PGES…SRGP) and 508–518 (EPGVVGAPGTA). The segment covering 519 to 528 (GPAGSGGLPG) has biased composition (gly residues). 2 stretches are compositionally biased toward low complexity: residues 551–595 (VGTT…PRGS) and 602–622 (VGPA…QPGA). Residues 623–632 (KGERGTKGPK) are compositionally biased toward basic and acidic residues. A compositionally biased stretch (low complexity) spans 640–650 (PTGPVGSAGPA). The segment covering 660–669 (GSRGDGGPPG) has biased composition (gly residues). Residues 671–680 (TGFPGAAGRT) show a composition bias toward low complexity. The span at 696–718 (GAAGKGDQGPVGRGETGAGGPPG) shows a compositional bias: gly residues. Composition is skewed to low complexity over residues 719–753 (FTGE…LGLP) and 761–771 (LPGVAGAVGEP). Residues 772–782 (GPLGIGPPGAR) are compositionally biased toward gly residues. A compositionally biased stretch (low complexity) spans 791–806 (EPGPVGSVGPVGALGP). Positions 816-827 (RGDKGEPGEKGP) are enriched in basic and acidic residues. Positions 897–907 (PAGPPGPPGPP) are enriched in pro residues.

Belongs to the fibrillar collagen family. In terms of assembly, trimers of one alpha 2(I) and two alpha 1(I) chains. Interacts (via C-terminus) with TMEM131 (via PapD-L domain); the interaction is direct and is involved in assembly and TRAPPIII ER-to-Golgi transport complex-dependent secretion of collagen. Prolines at the third position of the tripeptide repeating unit (G-X-Y) are hydroxylated in some or all of the chains. As to expression, expressed in bones.

It localises to the secreted. The protein localises to the extracellular space. It is found in the extracellular matrix. Type I collagen is a member of group I collagen (fibrillar forming collagen). The chain is Collagen alpha-2(I) chain from Acratocnus sp. (strain SLP-2019) (Ground sloth).